A 487-amino-acid polypeptide reads, in one-letter code: GlcNAc-binding protein A (487 aa).

A signal peptide spans 1–29 (MKKLPNKSLIALALLSVSGASFGHGYVSA). Residues 30–201 (YENGVAEGRA…SFYNVIDVKF (172 aa)) enclose the Chitin-binding type-4 domain. One can recognise a Chitin-binding type-3 domain in the interval 438–479 (AGTKVLASDGAVYQCKEFPFSGYCTQWSPSATQFEPGKGSHW).

This sequence belongs to the GbpA family.

It localises to the secreted. Its function is as follows. Probably interacts with GlcNAc residues. May promote attachment to both epithelial cell surfaces and chitin. In Vibrio campbellii (strain ATCC BAA-1116), this protein is GlcNAc-binding protein A.